The sequence spans 601 residues: UvrABC system protein C (601 aa).

The GIY-YIG domain occupies 17 to 95 (TLPGVYRMLD…IKALAPRYNI (79 aa)). Residues 204–239 (SELINELTRRMTAAAEAMAFEQAAELRDQIQALARV) form the UVR domain.

The protein belongs to the UvrC family. In terms of assembly, interacts with UvrB in an incision complex.

The protein localises to the cytoplasm. The UvrABC repair system catalyzes the recognition and processing of DNA lesions. UvrC both incises the 5' and 3' sides of the lesion. The N-terminal half is responsible for the 3' incision and the C-terminal half is responsible for the 5' incision. The protein is UvrABC system protein C of Chromobacterium violaceum (strain ATCC 12472 / DSM 30191 / JCM 1249 / CCUG 213 / NBRC 12614 / NCIMB 9131 / NCTC 9757 / MK).